A 284-amino-acid chain; its full sequence is Probable protein phosphatase 2C 41 (284 aa).

The PPM-type phosphatase domain maps to 35 to 282 (SYGFYLVRGM…DDISCVVVRF (248 aa)). Mn(2+) contacts are provided by Asp-72, Gly-73, Asp-234, and Asp-273.

It belongs to the PP2C family. It depends on Mg(2+) as a cofactor. Requires Mn(2+) as cofactor.

The enzyme catalyses O-phospho-L-seryl-[protein] + H2O = L-seryl-[protein] + phosphate. It catalyses the reaction O-phospho-L-threonyl-[protein] + H2O = L-threonyl-[protein] + phosphate. This chain is Probable protein phosphatase 2C 41, found in Oryza sativa subsp. japonica (Rice).